The sequence spans 56 residues: Putative zinc-binding protein YnfU (56 aa).

4 residues coordinate Zn(2+): Cys19, Cys22, Cys41, and Cys44.

Zn(2+) serves as cofactor.

This chain is Putative zinc-binding protein YnfU, found in Escherichia coli (strain K12).